A 95-amino-acid polypeptide reads, in one-letter code: Co-chaperonin GroES (95 aa).

It belongs to the GroES chaperonin family. Heptamer of 7 subunits arranged in a ring. Interacts with the chaperonin GroEL.

It is found in the cytoplasm. In terms of biological role, together with the chaperonin GroEL, plays an essential role in assisting protein folding. The GroEL-GroES system forms a nano-cage that allows encapsulation of the non-native substrate proteins and provides a physical environment optimized to promote and accelerate protein folding. GroES binds to the apical surface of the GroEL ring, thereby capping the opening of the GroEL channel. The chain is Co-chaperonin GroES from Maricaulis maris (strain MCS10) (Caulobacter maris).